A 333-amino-acid chain; its full sequence is Acetyltransferase Pat (333 aa).

Residues 85–88, 95–96, and arginine 135 contribute to the 3',5'-cyclic AMP site; these read GEIA and RT. The 165-residue stretch at 153–317 folds into the N-acetyltransferase domain; the sequence is FYLRPVLPGD…DTVPFEPELI (165 aa). Mg(2+) is bound at residue glutamate 211. Residues 237–239, 245–250, asparagine 276, and arginine 285 each bind substrate; these read FTV and GRGIGS.

In terms of assembly, homodimer. Requires Mg(2+) as cofactor.

Allosterically regulated by cAMP. Its function is as follows. Catalyzes specifically the acetylation of the epsilon-amino group of a highly conserved lysine residue in acetyl-CoA synthetase (ACS) and of the universal stress protein (USP) MSMEG_4207. Acetylation results in the inactivation of ACS activity and could be important for mycobacteria to adjust to environmental changes. The protein is Acetyltransferase Pat of Mycolicibacterium smegmatis (strain ATCC 700084 / mc(2)155) (Mycobacterium smegmatis).